A 456-amino-acid polypeptide reads, in one-letter code: MRAWEEFLLLQEKEIGTDTVNKWLRSLKVLCFDACNLYLEAKDSFQVTWFEEHIRHKVKANLINNNGKPIRVRVTSLDKSTPFKESQIQQEKTAYFTMQYGDIDPQMSFANFLVTPENDLPVRILQEFAKVSEQGKGFPFNPIYLFGPESSGKTHLMQAAVGILREAGVKTLYVSSQLFTEHLVSAIRSGEMQRFRAFYRNVEALFIEDIEVLSGKGATQEEFFHTFNSLHTEGKLIVISSIFAPGDLKAMEERLISRFEWGIAVPVSPLTREGLKSFLERRIEQLNIRIEETALDFLIQALSSHIKSLLHALTTLAKRVAYKKLSHQLLYQGDVEALLQDVLQAAEHIRLTPSGIVRATAQYYGVSPENILGRSQSREYVLPRQVAMFLCRQKLSLSYVKIGEVFSRDHSTVISSIRAISQKLDEDDRESDVSCGVQELTKRLSSAYQSLDLIVD.

The domain I, interacts with DnaA modulators stretch occupies residues 1 to 68 (MRAWEEFLLL…KANLINNNGK (68 aa)). Residues 68-101 (KPIRVRVTSLDKSTPFKESQIQQEKTAYFTMQYG) form a domain II region. The segment at 102 to 320 (DIDPQMSFAN…HALTTLAKRV (219 aa)) is domain III, AAA+ region. ATP is bound by residues serine 150, glycine 152, lysine 153, and threonine 154. Positions 321 to 456 (AYKKLSHQLL…AYQSLDLIVD (136 aa)) are domain IV, binds dsDNA.

This sequence belongs to the DnaA family. In terms of assembly, oligomerizes as a right-handed, spiral filament on DNA at oriC.

The protein resides in the cytoplasm. Functionally, plays an essential role in the initiation and regulation of chromosomal replication. ATP-DnaA binds to the origin of replication (oriC) to initiate formation of the DNA replication initiation complex once per cell cycle. Binds the DnaA box (a 9 base pair repeat at the origin) and separates the double-stranded (ds)DNA. Forms a right-handed helical filament on oriC DNA; dsDNA binds to the exterior of the filament while single-stranded (ss)DNA is stabiized in the filament's interior. The ATP-DnaA-oriC complex binds and stabilizes one strand of the AT-rich DNA unwinding element (DUE), permitting loading of DNA polymerase. After initiation quickly degrades to an ADP-DnaA complex that is not apt for DNA replication. Binds acidic phospholipids. This Chlamydia muridarum (strain MoPn / Nigg) protein is Chromosomal replication initiator protein DnaA 1.